A 153-amino-acid chain; its full sequence is Myosin regulatory light chain LC-2, mantle muscle (153 aa).

Residue A1 is modified to Blocked amino end (Ala). 2 consecutive EF-hand domains span residues 13–48 and 82–117; these read RQMQELKEAFTMIDQDRDGFIGMEDLKDMFSSLGRV and DPEDALRNAFSMFDEDGQGFIPEDYLKDLLENMGDN. Residues D26, D28, D30, and D37 each coordinate Ca(2+).

In terms of biological role, in molluscan muscle, calcium regulation is associated with myosin rather than with actin. Muscle myosin contains two types of light chains: the catalytic light chain, essential for ATPase activity, and the regulatory light chain, a calcium-binding protein responsible for Ca(2+) dependent binding and Ca(2+) dependent Mg-ATPase activity. This is Myosin regulatory light chain LC-2, mantle muscle from Todarodes pacificus (Japanese flying squid).